The sequence spans 615 residues: Sorting nexin-41 (615 aa).

Residues 1-71 are disordered; the sequence is MWNDEDNNPY…DEGDYVGQAN (71 aa). Over residues 42-53 the composition is skewed to low complexity; that stretch reads SHSSNPDISDFS. The PX domain maps to 93 to 210; that stretch reads PDMPILITDA…RFLDPNVSWS (118 aa). A 1,2-diacyl-sn-glycero-3-phospho-(1D-myo-inositol-3-phosphate) is bound by residues Arg127, Ser129, Lys153, and Arg176. Disordered regions lie at residues 218-277 and 432-504; these read ASSV…RFPP and QYLN…RKTS. 2 stretches are compositionally biased toward polar residues: residues 252-263 and 434-446; these read LKSTSGTSSSPN and LNRTSPQAPTKQR. Residues 447-456 are compositionally biased toward low complexity; that stretch reads SLSTSSATSS.

This sequence belongs to the sorting nexin family.

Its subcellular location is the endosome membrane. It is found in the endomembrane system. Its function is as follows. May be required for cytoplasm to vacuole transport (Cvt) and pexophagy. This Emericella nidulans (strain FGSC A4 / ATCC 38163 / CBS 112.46 / NRRL 194 / M139) (Aspergillus nidulans) protein is Sorting nexin-41 (snx41).